The following is a 327-amino-acid chain: Neurogenic differentiation factor 6-A (327 aa).

Residues 17-85 (GANFPRDCVG…KKMTKARVDR (69 aa)) are disordered. Residues 24–46 (CVGDLKGNKQEPFEKEETLSHVM) are compositionally biased toward basic and acidic residues. Positions 47–63 (DDDDSEKDEDEREDGQD) are enriched in acidic residues. The segment covering 68–80 (PRRRGPRKKKMTK) has biased composition (basic residues). The short motif at 74 to 80 (RKKKMTK) is the Nuclear localization signal element. The region spanning 88-140 (VRRMEANARERNRMHGLNNALDSLRKVVPCYSKTQKLSKIETLRLAKNYIWAL) is the bHLH domain.

As to quaternary structure, efficient DNA binding requires dimerization with another bHLH protein. Embryonic olfactory bulbs. In adult, expressed in brain, eye, intestine, muscle, ovary and skin.

It is found in the nucleus. Its function is as follows. Differentiation factor required for neurogenesis. Acts as an upstream activator of isl1. The sequence is that of Neurogenic differentiation factor 6-A from Danio rerio (Zebrafish).